Consider the following 185-residue polypeptide: Ribosome-recycling factor (185 aa).

The protein belongs to the RRF family.

Its subcellular location is the cytoplasm. Responsible for the release of ribosomes from messenger RNA at the termination of protein biosynthesis. May increase the efficiency of translation by recycling ribosomes from one round of translation to another. The polypeptide is Ribosome-recycling factor (Wolbachia pipientis wMel).